The sequence spans 484 residues: uncharacterized protein (484 aa).

A compositionally biased stretch (low complexity) spans 1-14 (MIDSTSTATATSKT). The segment at 1–32 (MIDSTSTATATSKTVELNTNGSKTDASSENGT) is disordered. Residues 15-32 (VELNTNGSKTDASSENGT) are compositionally biased toward polar residues. Position 305 is an N6-(pyridoxal phosphate)lysine (Lys305).

It belongs to the class-III pyridoxal-phosphate-dependent aminotransferase family. Requires pyridoxal 5'-phosphate as cofactor.

This is an uncharacterized protein from Schizosaccharomyces pombe (strain 972 / ATCC 24843) (Fission yeast).